A 292-amino-acid polypeptide reads, in one-letter code: Cbb3-type cytochrome c oxidase subunit CcoP (292 aa).

The next 2 helical transmembrane spans lie at 11–31 and 62–82; these read FGLI…SSLI and VGWI…FFFG. Cytochrome c domains are found at residues 116 to 195 and 205 to 288; these read ELVD…MAEI and QLID…QSLK. The heme c site is built by cysteine 129, cysteine 132, histidine 133, methionine 174, cysteine 219, cysteine 222, histidine 223, and methionine 264.

The protein belongs to the CcoP / FixP family. As to quaternary structure, component of the cbb3-type cytochrome c oxidase at least composed of CcoN, CcoO, CcoQ and CcoP. Requires heme c as cofactor.

Its subcellular location is the cell inner membrane. It functions in the pathway energy metabolism; oxidative phosphorylation. Its function is as follows. C-type cytochrome. Part of the cbb3-type cytochrome c oxidase complex. CcoP subunit is required for transferring electrons from donor cytochrome c via its heme groups to CcoO subunit. From there, electrons are shuttled to the catalytic binuclear center of CcoN subunit where oxygen reduction takes place. The complex also functions as a proton pump. This Helicobacter pylori (strain 52) protein is Cbb3-type cytochrome c oxidase subunit CcoP.